Here is a 333-residue protein sequence, read N- to C-terminus: Beta-ketoacyl-[acyl-carrier-protein] synthase III (333 aa).

Active-site residues include cysteine 117 and histidine 257. Residues 258–262 (QANLR) are ACP-binding. The active site involves asparagine 287.

The protein belongs to the thiolase-like superfamily. FabH family. In terms of assembly, homodimer.

It is found in the cytoplasm. The catalysed reaction is malonyl-[ACP] + acetyl-CoA + H(+) = 3-oxobutanoyl-[ACP] + CO2 + CoA. It participates in lipid metabolism; fatty acid biosynthesis. Functionally, catalyzes the condensation reaction of fatty acid synthesis by the addition to an acyl acceptor of two carbons from malonyl-ACP. Catalyzes the first condensation reaction which initiates fatty acid synthesis and may therefore play a role in governing the total rate of fatty acid production. Possesses both acetoacetyl-ACP synthase and acetyl transacylase activities. Its substrate specificity determines the biosynthesis of branched-chain and/or straight-chain of fatty acids. The sequence is that of Beta-ketoacyl-[acyl-carrier-protein] synthase III from Azobacteroides pseudotrichonymphae genomovar. CFP2.